Consider the following 289-residue polypeptide: Delta-sarcoglycan (289 aa).

Residues 1 to 37 (MPQEQYSHHRSTMPSSEGPHIYKVGIYGWRKRCLYFF) are Cytoplasmic-facing. The chain crosses the membrane as a helical; Signal-anchor for type II membrane protein span at residues 38-56 (VLLLMILILVNLAMTIWIL). Topologically, residues 57–289 (KVMNFTIDGM…TCQINTSVCL (233 aa)) are extracellular. N-linked (GlcNAc...) asparagine glycosylation is found at Asn-60 and Asn-108. Intrachain disulfides connect Cys-263-Cys-288 and Cys-265-Cys-281. Asn-284 is a glycosylation site (N-linked (GlcNAc...) asparagine).

The protein belongs to the sarcoglycan beta/delta/gamma/zeta family. In terms of assembly, interacts with FLNC. Cross-link to form 2 major subcomplexes: one consisting of SGCB, SGCD and SGCG and the other consisting of SGCB and SGCD. The association between SGCB and SGCG is particularly strong while SGCA is loosely associated with the other sarcoglycans. Interacts with DAG1. In terms of processing, disulfide bonds are present. In terms of tissue distribution, most strongly expressed in skeletal and heart muscle. Also detected in proliferating myoblasts.

The protein resides in the cell membrane. It is found in the sarcolemma. It localises to the cytoplasm. Its subcellular location is the cytoskeleton. Component of the sarcoglycan complex, a subcomplex of the dystrophin-glycoprotein complex which forms a link between the F-actin cytoskeleton and the extracellular matrix. This is Delta-sarcoglycan (Sgcd) from Mus musculus (Mouse).